We begin with the raw amino-acid sequence, 85 residues long: Small ribosomal subunit protein bS18c (85 aa).

Belongs to the bacterial ribosomal protein bS18 family. As to quaternary structure, part of the 30S ribosomal subunit.

The protein resides in the plastid. It localises to the chloroplast. The protein is Small ribosomal subunit protein bS18c of Tupiella akineta (Green alga).